Reading from the N-terminus, the 394-residue chain is uncharacterized protein (394 aa).

Helical transmembrane passes span 22-42, 60-80, 81-101, 231-251, 271-291, 303-323, 328-348, and 355-375; these read VLVSLFGVSLLLLCLAGVLLH, LALFDLHGLIGIWGLPWLLLF, GFTGALSGLGALGTLLLAPVA, LHLAMGLGACLLCASGLYLWL, GFCAGLVAAAALLLLGLQLAP, LFLVLWAAAGLAALLLPGDWP, LLGVAGLACLAAAVAHLAPWL, and ALGPDLTLILCGALLIRHAWM.

The protein localises to the cell membrane. This is an uncharacterized protein from Pseudomonas aeruginosa (strain ATCC 15692 / DSM 22644 / CIP 104116 / JCM 14847 / LMG 12228 / 1C / PRS 101 / PAO1).